We begin with the raw amino-acid sequence, 197 residues long: Peptide deformylase (197 aa).

Cys106 and His148 together coordinate Fe cation. The active site involves Glu149. Fe cation is bound at residue His152.

It belongs to the polypeptide deformylase family. Fe(2+) is required as a cofactor.

It carries out the reaction N-terminal N-formyl-L-methionyl-[peptide] + H2O = N-terminal L-methionyl-[peptide] + formate. Removes the formyl group from the N-terminal Met of newly synthesized proteins. Requires at least a dipeptide for an efficient rate of reaction. N-terminal L-methionine is a prerequisite for activity but the enzyme has broad specificity at other positions. This Mycolicibacterium smegmatis (strain ATCC 700084 / mc(2)155) (Mycobacterium smegmatis) protein is Peptide deformylase.